The primary structure comprises 273 residues: Dermonecrotic toxin LdSicTox-alphaIB1av (273 aa).

H5 is a catalytic residue. Mg(2+) is bound by residues E25 and D27. The active-site Nucleophile is the H41. Disulfide bonds link C45–C51 and C47–C190. D85 contributes to the Mg(2+) binding site. N250 is a glycosylation site (N-linked (GlcNAc...) asparagine).

The protein belongs to the arthropod phospholipase D family. Class II subfamily. It depends on Mg(2+) as a cofactor. As to expression, expressed by the venom gland.

It localises to the secreted. It catalyses the reaction an N-(acyl)-sphingosylphosphocholine = an N-(acyl)-sphingosyl-1,3-cyclic phosphate + choline. It carries out the reaction an N-(acyl)-sphingosylphosphoethanolamine = an N-(acyl)-sphingosyl-1,3-cyclic phosphate + ethanolamine. The catalysed reaction is a 1-acyl-sn-glycero-3-phosphocholine = a 1-acyl-sn-glycero-2,3-cyclic phosphate + choline. The enzyme catalyses a 1-acyl-sn-glycero-3-phosphoethanolamine = a 1-acyl-sn-glycero-2,3-cyclic phosphate + ethanolamine. Its function is as follows. Dermonecrotic toxins cleave the phosphodiester linkage between the phosphate and headgroup of certain phospholipids (sphingolipid and lysolipid substrates), forming an alcohol (often choline) and a cyclic phosphate. This toxin acts on sphingomyelin (SM). It may also act on ceramide phosphoethanolamine (CPE), lysophosphatidylcholine (LPC) and lysophosphatidylethanolamine (LPE), but not on lysophosphatidylserine (LPS), and lysophosphatidylglycerol (LPG). It acts by transphosphatidylation, releasing exclusively cyclic phosphate products as second products. Induces dermonecrosis, hemolysis, increased vascular permeability, edema, inflammatory response, and platelet aggregation. This chain is Dermonecrotic toxin LdSicTox-alphaIB1av, found in Loxosceles deserta (Desert recluse spider).